Here is a 388-residue protein sequence, read N- to C-terminus: Glutamine transporter 2 (388 aa).

Helical transmembrane passes span 5–27, 31–53, 86–106, 121–141, 147–167, 186–206, 218–238, 268–288, 302–322, 326–346, and 368–388; these read LFGS…IPMV, FGLF…AALL, LFYL…ADLI, FAQV…TQII, LLFF…IPGM, TSTI…LVAY, MVIL…YAVV, IILS…VAMA, IVTY…AADQ, VLGY…LAMV, and GGKL…ISQI.

The protein belongs to the amino acid/polyamine transporter 2 family.

It localises to the cell inner membrane. Functionally, seems to be involved in glutamine transport. Complements an E.coli glnP deletion mutant. The sequence is that of Glutamine transporter 2 from Aliivibrio fischeri (strain ATCC 700601 / ES114) (Vibrio fischeri).